A 68-amino-acid chain; its full sequence is Conotoxin Mr3.4 (68 aa).

Positions 1 to 19 are cleaved as a signal peptide; sequence MSKLGVLLTICLLLFPLTA. Positions 20–49 are excised as a propeptide; sequence VPLDGDQPADRPAERMQDDISSERHPFFDR. Disulfide bonds link cysteine 53-cysteine 67, cysteine 54-cysteine 63, and cysteine 59-cysteine 66. At proline 65 the chain carries 4-hydroxyproline.

It belongs to the conotoxin M superfamily. In terms of tissue distribution, expressed by the venom duct.

The protein localises to the secreted. This Conus marmoreus (Marble cone) protein is Conotoxin Mr3.4.